The chain runs to 1157 residues: Hephaestin (1157 aa).

Residues Met1–Ser18 form the signal peptide. The Extracellular segment spans residues Ile19–Ser1109. Plastocyanin-like domains lie at Ala24–Cys206, Gln218–Cys366, Pro370–Cys559, Lys569–Cys717, Ala730–Cys902, and Asn910–Glu1066. Asn49 and Asn54 each carry an N-linked (GlcNAc...) asparagine glycan. Residues Gly70 and Tyr73 each coordinate Na(+). Cu(2+) contacts are provided by His126 and His128. His126 serves as a coordination point for O2. 3 residues coordinate Ca(2+): Lys134, Asp152, and Asp153. Residue Asn164 is glycosylated (N-linked (GlcNAc...) asparagine). Cys180 and Cys206 are disulfide-bonded. His186 and His188 together coordinate Cu(2+). His186 is an O2 binding site. The N-linked (GlcNAc...) asparagine glycan is linked to Asn236. Residue Ser265 coordinates Na(+). The cysteines at positions 285 and 366 are disulfide-linked. His304, Cys347, and His352 together coordinate Cu(2+). Positions 416, 425, and 428 each coordinate Na(+). Cys533 and Cys559 are disulfide-bonded. Residue Asn587 is glycosylated (N-linked (GlcNAc...) asparagine). A Na(+)-binding site is contributed by Ser616. Cys636 and Cys717 form a disulfide bridge. Residues His655, Cys698, His703, and Met708 each contribute to the Cu(2+) site. Asn713 and Asn757 each carry an N-linked (GlcNAc...) asparagine glycan. Na(+)-binding residues include Phe768 and Gly777. Cysteines 876 and 902 form a disulfide. A glycan (N-linked (GlcNAc...) asparagine) is linked at Asn930. Positions 999, 1002, 1004, 1044, 1045, 1046, 1050, and 1055 each coordinate Cu(2+). O2 is bound by residues His1002 and His1004. His1046 is an O2 binding site. A helical membrane pass occupies residues Ala1110–Trp1130. Topologically, residues Tyr1131 to Gln1157 are cytoplasmic. Residues Ser1144, Ser1149, and Ser1154 each carry the phosphoserine modification.

The protein belongs to the multicopper oxidase family. In terms of assembly, part of a complex composed of SLC40A1/ferroportin, TF/transferrin and HEPH/hephaestin that transfers iron from cells to transferrin. Requires Cu cation as cofactor.

The protein localises to the basolateral cell membrane. It catalyses the reaction 4 Fe(2+) + O2 + 4 H(+) = 4 Fe(3+) + 2 H2O. Functionally, plasma membrane ferroxidase that mediates the extracellular conversion of ferrous/Fe(2+) iron into its ferric/Fe(3+) form. Couples ferroportin which specifically exports ferrous/Fe(2+) iron from cells to transferrin that only binds and shuttles extracellular ferric/Fe(3+) iron throughout the body. By helping iron transfer from cells to blood mainly contributes to dietary iron absorption by the intestinal epithelium and more generally regulates iron levels in the body. This Mus musculus (Mouse) protein is Hephaestin.